We begin with the raw amino-acid sequence, 149 residues long: MVFLSAPLWLRNRITDRYWRVQEVLKHARHFRGRKNRCYRLAVRAVTRAFVRCTRARSLKKRHLRTLWINRITAASQEHGLKYPAFILNLIKCQVELNRKVLADLAIYEPKTFKSLAALSKRRREEGFVAALGDGKEPEGIFSRVAQHH.

Residues 1–9 (MVFLSAPLW) constitute a mitochondrion transit peptide.

Belongs to the bacterial ribosomal protein bL20 family. In terms of assembly, component of the mitochondrial ribosome large subunit (39S) which comprises a 16S rRNA and about 50 distinct proteins. Interacts with OXA1L.

It localises to the mitochondrion. In Bos taurus (Bovine), this protein is Large ribosomal subunit protein bL20m (MRPL20).